A 466-amino-acid chain; its full sequence is Glycosyl hydrolase family 109 protein (466 aa).

A signal peptide (tat-type signal) is located at residues 1–30 (MENTRRSFLKKVSAAGIGAAGLAMAGNAGA). Residues 59-60 (SR), D81, 130-133 (WEWH), 151-152 (EV), and N180 contribute to the NAD(+) site. Y209 provides a ligand contact to substrate. 241–245 (AEAQW) contributes to the NAD(+) binding site. Residues R246, 258–261 (YPTH), and Y340 contribute to the substrate site. Y258 contacts NAD(+).

Belongs to the Gfo/Idh/MocA family. Glycosyl hydrolase 109 subfamily. Requires NAD(+) as cofactor. Post-translationally, predicted to be exported by the Tat system. The position of the signal peptide cleavage has not been experimentally proven.

In terms of biological role, glycosidase. This Parabacteroides distasonis (strain ATCC 8503 / DSM 20701 / CIP 104284 / JCM 5825 / NCTC 11152) protein is Glycosyl hydrolase family 109 protein.